A 234-amino-acid chain; its full sequence is Glutathione S-transferase sirG (234 aa).

The region spanning 15-99 (LYVVKATPTS…YLTDAYDHEG (85 aa)) is the GST N-terminal domain. Residues 105–230 (DLWERTQVNN…KALSQKFRPS (126 aa)) enclose the GST C-terminal domain.

It belongs to the GST superfamily.

It catalyses the reaction RX + glutathione = an S-substituted glutathione + a halide anion + H(+). The protein operates within mycotoxin biosynthesis. In terms of biological role, glutathione S-transferase; part of the gene cluster that mediates the biosynthesis of sirodesmin PL, an epipolythiodioxopiperazine (ETP) characterized by a disulfide bridged cyclic dipeptide and that acts as a phytotoxin which is involved in the blackleg didease of canola. SirD catalyzes the O-prenylation of L-tyrosine (L-Tyr) in the presence of dimethylallyl diphosphate (DMAPP) to yield 4-O-dimethylallyl-L-Tyr, and therefore represents probably the first pathway-specific enzyme in the biosynthesis of sirodesmin PL. 4-O-dimethylallyl-L-Tyr, then undergoes condensation with L-Ser in a reaction catalyzed by the non-ribosomal peptide synthase sirP to form the diketopiperazine (DKP) backbone. Further bishydroxylation of the DKP performed by the cytochrome P450 monooxygenase sirC leads to the production of the intermediate phomamide. This step is essential to form the reactive thiol group required for toxicity of sirodesmin PL. The next steps of sirodesmin biosynthesis are not well understood yet, but some predictions could be made from intermediate compounds identification. Phomamide is converted into phomalizarine via oxidation, probably by sirT. Further oxidation, methylation (by sirM or sirN) and reduction steps convert phomalizarine to deacetyl sirodesmin. Finally, acetyltransferase sirH probably acetylates deacetyl sirodesmin to produce sirodesmin PL. The polypeptide is Glutathione S-transferase sirG (Leptosphaeria maculans (Blackleg fungus)).